The primary structure comprises 247 residues: ATP synthase subunit a, chloroplastic (247 aa).

The next 5 helical transmembrane spans lie at 38-58 (QVLI…TLAV), 95-115 (VPFI…GALL), 134-154 (INTT…AGLT), 199-219 (LVVV…VMFL), and 220-240 (GLFT…AYIG).

Belongs to the ATPase A chain family. F-type ATPases have 2 components, CF(1) - the catalytic core - and CF(0) - the membrane proton channel. CF(1) has five subunits: alpha(3), beta(3), gamma(1), delta(1), epsilon(1). CF(0) has four main subunits: a, b, b' and c.

The protein resides in the plastid. It localises to the chloroplast thylakoid membrane. Key component of the proton channel; it plays a direct role in the translocation of protons across the membrane. The protein is ATP synthase subunit a, chloroplastic of Vitis vinifera (Grape).